The sequence spans 101 residues: Urease subunit beta (101 aa).

It belongs to the urease beta subunit family. Heterotrimer of UreA (gamma), UreB (beta) and UreC (alpha) subunits. Three heterotrimers associate to form the active enzyme.

It is found in the cytoplasm. It carries out the reaction urea + 2 H2O + H(+) = hydrogencarbonate + 2 NH4(+). It participates in nitrogen metabolism; urea degradation; CO(2) and NH(3) from urea (urease route): step 1/1. The chain is Urease subunit beta from Burkholderia orbicola (strain AU 1054).